Reading from the N-terminus, the 305-residue chain is MEDGELIEYFKSQMKGDPKMASAVAAIQTLLEFLKRDKGETLQGLRANLTYAIKTLCGVDSSVAVSSGGELFLRFISLTSLEYSDYSKCKKIMIERGELFLRRISLSRNKIANLCHTFIKDGARILTHAYSRVVLRVLEEAVAAKKRFSVYITESQPDLSGKKMAKALSHLNVPVTVVLDAAVGYIMEKADLVIVGAEGVVENGGIINKIGTNQMAVCAKAQNKPFYVVAESFKFVRLFPLNQEDVPDKFKYKADTLKSVQTGQDLKEEHPWVDYTSPSLITLLFTDLGVLTPSAVSDELIKLYL.

The residue at position 35 (lysine 35) is an N6-acetyllysine.

This sequence belongs to the eIF-2B alpha/beta/delta subunits family. Component of the translation initiation factor 2B (eIF2B) complex which is a heterodecamer of two sets of five different subunits: alpha, beta, gamma, delta and epsilon. Subunits alpha, beta and delta comprise a regulatory subcomplex and subunits epsilon and gamma comprise a catalytic subcomplex. Within the complex, the hexameric regulatory complex resides at the center, with the two heterodimeric catalytic subcomplexes bound on opposite sides.

Its subcellular location is the cytoplasm. It localises to the cytosol. With respect to regulation, activated by the chemical integrated stress response (ISR) inhibitor ISRIB which stimulates guanine nucleotide exchange factor activity for both phosphorylated and unphosphorylated eIF2. Acts as a component of the translation initiation factor 2B (eIF2B) complex, which catalyzes the exchange of GDP for GTP on eukaryotic initiation factor 2 (eIF2) gamma subunit. Its guanine nucleotide exchange factor activity is repressed when bound to eIF2 complex phosphorylated on the alpha subunit, thereby limiting the amount of methionyl-initiator methionine tRNA available to the ribosome and consequently global translation is repressed. This Mus musculus (Mouse) protein is Translation initiation factor eIF2B subunit alpha (Eif2b1).